The primary structure comprises 360 residues: Phospho-N-acetylmuramoyl-pentapeptide-transferase (360 aa).

Helical transmembrane passes span Tyr20–Gly40, Thr71–Ala91, Leu93–Phe113, Leu134–Ala154, Ala168–Ala188, Gly199–Val219, Leu239–Pro259, Val263–Val283, Ile288–Val308, and Gln337–Leu357.

The protein belongs to the glycosyltransferase 4 family. MraY subfamily. Mg(2+) serves as cofactor.

The protein localises to the cell inner membrane. The catalysed reaction is UDP-N-acetyl-alpha-D-muramoyl-L-alanyl-gamma-D-glutamyl-meso-2,6-diaminopimeloyl-D-alanyl-D-alanine + di-trans,octa-cis-undecaprenyl phosphate = di-trans,octa-cis-undecaprenyl diphospho-N-acetyl-alpha-D-muramoyl-L-alanyl-D-glutamyl-meso-2,6-diaminopimeloyl-D-alanyl-D-alanine + UMP. It participates in cell wall biogenesis; peptidoglycan biosynthesis. Catalyzes the initial step of the lipid cycle reactions in the biosynthesis of the cell wall peptidoglycan: transfers peptidoglycan precursor phospho-MurNAc-pentapeptide from UDP-MurNAc-pentapeptide onto the lipid carrier undecaprenyl phosphate, yielding undecaprenyl-pyrophosphoryl-MurNAc-pentapeptide, known as lipid I. This chain is Phospho-N-acetylmuramoyl-pentapeptide-transferase, found in Paracoccus denitrificans (strain Pd 1222).